Reading from the N-terminus, the 371-residue chain is Alginate lyase (371 aa).

Residues 1-26 form the signal peptide; it reads MQSTDLKRLLIPSLLGLAIVTGSAQA. Substrate contacts are provided by residues 67 to 68, 140 to 141, and Y258; these read SK and HT.

Belongs to the polysaccharide lyase 5 family.

Its subcellular location is the periplasm. It catalyses the reaction Eliminative cleavage of alginate to give oligosaccharides with 4-deoxy-alpha-L-erythro-hex-4-enuronosyl groups at their non-reducing ends and beta-D-mannuronate at their reducing end.. Catalyzes the depolymerization of alginate by cleaving the beta-1,4 glycosidic bond between two adjacent sugar residues via a beta-elimination mechanism. May serve to degrade mislocalized alginate that is trapped in the periplasmic space. This chain is Alginate lyase, found in Pseudomonas fluorescens (strain ATCC BAA-477 / NRRL B-23932 / Pf-5).